The following is a 248-amino-acid chain: 3-deoxy-manno-octulosonate cytidylyltransferase (248 aa).

Belongs to the KdsB family.

It localises to the cytoplasm. The catalysed reaction is 3-deoxy-alpha-D-manno-oct-2-ulosonate + CTP = CMP-3-deoxy-beta-D-manno-octulosonate + diphosphate. The protein operates within nucleotide-sugar biosynthesis; CMP-3-deoxy-D-manno-octulosonate biosynthesis; CMP-3-deoxy-D-manno-octulosonate from 3-deoxy-D-manno-octulosonate and CTP: step 1/1. It functions in the pathway bacterial outer membrane biogenesis; lipopolysaccharide biosynthesis. Functionally, activates KDO (a required 8-carbon sugar) for incorporation into bacterial lipopolysaccharide in Gram-negative bacteria. This chain is 3-deoxy-manno-octulosonate cytidylyltransferase, found in Klebsiella pneumoniae subsp. pneumoniae (strain ATCC 700721 / MGH 78578).